The sequence spans 271 residues: Bifunctional protein FolD (271 aa).

Residues 154–156 (GRS), serine 181, and isoleucine 222 contribute to the NADP(+) site.

The protein belongs to the tetrahydrofolate dehydrogenase/cyclohydrolase family. In terms of assembly, homodimer.

It carries out the reaction (6R)-5,10-methylene-5,6,7,8-tetrahydrofolate + NADP(+) = (6R)-5,10-methenyltetrahydrofolate + NADPH. The catalysed reaction is (6R)-5,10-methenyltetrahydrofolate + H2O = (6R)-10-formyltetrahydrofolate + H(+). Its pathway is one-carbon metabolism; tetrahydrofolate interconversion. Its function is as follows. Catalyzes the oxidation of 5,10-methylenetetrahydrofolate to 5,10-methenyltetrahydrofolate and then the hydrolysis of 5,10-methenyltetrahydrofolate to 10-formyltetrahydrofolate. The sequence is that of Bifunctional protein FolD from Thermotoga sp. (strain RQ2).